Reading from the N-terminus, the 1018-residue chain is MGSNGSELWFNKELEYSQQLTNGKMKEFFFLVSETMDWLNEHMLEVSKLQLESDIYELVRTPTKIKEKYSTPRLSPVHRCALPTPRMRLTSIQHQLEEAAVEGYKSGESNTVKEPKELHTATNTETQFDDDRDSTKLSSEYVKDDIVNKSTKGGVSPIKETRLPTNLPAFSPTSVERRFTEWNVPLRETSPSPSETADSPNKLPKQKHPAYSFVTLPKREEILKRPASLHSRVESTNSFINQLNRRRTKDNLTNNPEISLDEPIKALPSTTSDAPSSLLNTNVSSSPSKFRKFLSSVIPAKTDLSAKESLTSSTRLSTSYKTRKRSSGVAFSSETVTSSSKERKRSVENEMLKPHPTIFESPPEITSFDKSNAVEAEALTAKLKSNEERLPVSSQPGSDAKSQEFDFFEAKIPDSIAKLNELTASNENHYELKTYDRAERLRQKIQEVSSNKRLIPSTPPTKKPINAVLDAAKNSAAKDLHLAKMKLNNKNDESSLSPAKSHAVITQAPKIPLISTFTRLSTRKSSNDFNSSNSRPSSNALKSDANENTDSSLPPSKKEFIEKSLHKLSEPLHDDSRQNSDHNFAPHSRPIAIRVATASQRELEQTEKRKAKNGAANASNMESRSSENETHRFKKFYGKERELSNNEFPSRQTKTVTSANSSNIRDMEHTISDKPRSEPDAIPSSKSMHSNKPFEEKSEKPTTKRLVTNPSNVNASWHSNMLKRQEDLRKKKPLTDNGATSRHMLKSGLTRVTSKPTQRFANELAEDMSLAFHSTIPKKMEPDSVTSVTQPSVGSLRNNFDIGTTNSQNEDRKKKIAAQKNKNPVHGNVGLTNQHGFKTMHHNVNPFTKQNGIMKGKLPSSSTSQSNKPFIEKASMHAPAKGRNSSMQEPSSKSPLLKTPKSNYFPGYGSLSPNTSVELPEINSDYSDDSDDEGNKKKVNLPSWAESPELREQLKRQQKWDPDKIFGMIKPLQMDEYFRSKDRSKIRFRPRSSSADWSSQDRLTQAEIDNYKKNMGFL.

Phosphoserine is present on S171. Disordered stretches follow at residues 184 to 207 (VPLR…PKQK), 247 to 287 (RTKD…SSSP), 306 to 365 (AKES…PPEI), 522 to 556 (TRKS…LPPS), 570 to 756 (EPLH…TSKP), 781 to 813 (EPDS…EDRK), 848 to 867 (TKQN…SQSN), and 877 to 944 (HAPA…LPSW). Polar residues-rich tracts occupy residues 189-199 (TSPSPSETADS) and 268-287 (PSTT…SSSP). Residues 309–320 (SLTSSTRLSTSY) are compositionally biased toward low complexity. 2 stretches are compositionally biased toward polar residues: residues 329-339 (VAFSSETVTSS) and 522-554 (TRKS…SSLP). Composition is skewed to basic and acidic residues over residues 570–580 (EPLHDDSRQNS) and 624–644 (RSSE…RELS). Residues 645-664 (NNEFPSRQTKTVTSANSSNI) are compositionally biased toward polar residues. Composition is skewed to basic and acidic residues over residues 665–679 (RDME…RSEP) and 692–702 (KPFEEKSEKPT). 2 stretches are compositionally biased toward polar residues: residues 705 to 719 (RLVT…SWHS) and 784 to 808 (SVTS…TNSQ). The span at 890–902 (PSSKSPLLKTPKS) shows a compositional bias: low complexity.

Belongs to the INCENP family. Component of the CPC complex at least composed of ark1, bir1 and pic1.

The protein localises to the nucleus. It is found in the cytoplasm. The protein resides in the cytoskeleton. Its subcellular location is the spindle. In terms of biological role, component of the chromosomal passenger complex (CPC), a complex that acts as a key regulator of mitosis. Has a role in sister chromatid cohesion and condensation. The sequence is that of Inner centromere protein pic1 (pic1) from Schizosaccharomyces pombe (strain 972 / ATCC 24843) (Fission yeast).